Here is a 760-residue protein sequence, read N- to C-terminus: MTTTTHILGYPRIGEKRELKFAQEKYWRGEIEQTELKQVGATLREKNWATQAEAGLSFATAGDFAWYDHVLTTTLLLGHTPKRHANGFPDLDTLFKVGRGQSQAGCGCSGAAASDMTKWFNTNYHYIVPEFSKDDSFEVSWPQLFEEVNDAIKLGHNVKPVLLGPLSYLYLGKEIEEDFDRLTLLPRLLTAYQAILSKLANQGVEWVQIDEPILSLELEEKWGDAFKLAYQVIRSDVKVLLTTYFDSVSDTLDKIVELPVDGLHIDLSASPEQLDEVVEKLPQGWVLSAGVVNGRNVWRSDLSAQRERLQPVKDKLGDNLWVASSCSLLHSPVDLDLEPALSDEVKSWFAFAKQKVTEVALLGRALDGDHNAILVCDTYSQPIKDRKTAAHVNKPHVQARLNSISASLTERSAPYAERAAHQAEVLGLPLLPTTTIGSFPQTSEIRVQRSAFRSGQLSTDDYHQALKGHIADAVRRQEALDLDVLVHGEAERNDMVEYFAENLAGFQTTKFGWVQSYGSRCVKPAIVVADIEREKPITVEWSTYAQSLTNKQMKGMLTGPVTILCWTFPREDITRKAIADQLALALRDEVSDLQQAGINIIQIDEPAIREGLPLKKRDHKAYLQWAVDAFKIAAASAKPETQIHTHMCYSEFNEIIDSVAALDADVITIETSRSNMELLKAFEDFNYPNEIGPGVYDIHSPNIPSEEWIEELIKKAAEKIPAQRLWVNPDCGLKTRNWSETEAALANLVSAAKKLRAELV.

Residues 17–20 and Lys118 contribute to the 5-methyltetrahydropteroyltri-L-glutamate site; that span reads RELK. L-homocysteine is bound by residues 436 to 438 and Glu489; that span reads IGS. L-methionine-binding positions include 436-438 and Glu489; that span reads IGS. 5-methyltetrahydropteroyltri-L-glutamate-binding positions include 520–521 and Trp566; that span reads RC. Position 604 (Asp604) interacts with L-homocysteine. Asp604 provides a ligand contact to L-methionine. Glu610 serves as a coordination point for 5-methyltetrahydropteroyltri-L-glutamate. The Zn(2+) site is built by His646, Cys648, and Glu670. Residue His699 is the Proton donor of the active site. Zn(2+) is bound at residue Cys731.

Belongs to the vitamin-B12 independent methionine synthase family. Requires Zn(2+) as cofactor.

The enzyme catalyses 5-methyltetrahydropteroyltri-L-glutamate + L-homocysteine = tetrahydropteroyltri-L-glutamate + L-methionine. Its pathway is amino-acid biosynthesis; L-methionine biosynthesis via de novo pathway; L-methionine from L-homocysteine (MetE route): step 1/1. Its function is as follows. Catalyzes the transfer of a methyl group from 5-methyltetrahydrofolate to homocysteine resulting in methionine formation. This Vibrio harveyi (Beneckea harveyi) protein is 5-methyltetrahydropteroyltriglutamate--homocysteine methyltransferase.